The chain runs to 135 residues: Large ribosomal subunit protein uL16c (135 aa).

It belongs to the universal ribosomal protein uL16 family. Part of the 50S ribosomal subunit.

It localises to the plastid. The protein resides in the chloroplast. The chain is Large ribosomal subunit protein uL16c from Cucumis sativus (Cucumber).